A 75-amino-acid chain; its full sequence is Disintegrin CTF-II (75 aa).

The 75-residue stretch at 1-75 (ELLEEGEDCY…SDDCPRWNDL (75 aa)) folds into the Disintegrin domain. Disulfide bonds link Cys9–Cys24, Cys11–Cys19, Cys18–Cys41, Cys32–Cys38, Cys37–Cys62, and Cys50–Cys69. Residues 54–56 (RGD) carry the Cell attachment site motif.

This sequence belongs to the venom metalloproteinase (M12B) family. P-II subfamily. P-IIa sub-subfamily. Monomer (disintegrin). In terms of tissue distribution, expressed by the venom gland.

The protein resides in the secreted. Functionally, inhibits fibrinogen interaction with platelet receptors, and inhibits aggregation induced by ADP, thrombin, collagen and platelet-activating factor. Acts by binding to the alpha-IIb/beta-3 (ITGA2B/ITGB3) on the platelet surface. In Protobothrops flavoviridis (Habu), this protein is Disintegrin CTF-II.